A 592-amino-acid chain; its full sequence is Inactive heparanase-2 (592 aa).

Positions 1 to 38 (MRVLCAFPEAMASSSSRPPSCLALVALFLALLLHLSLS) are cleaved as a signal peptide. 2 N-linked (GlcNAc...) asparagine glycosylation sites follow: Asn254 and Asn392.

The protein belongs to the glycosyl hydrolase 79 family. As to quaternary structure, interacts with HPSE. Interacts with SDC1 (via glycan chains).

The protein localises to the secreted. Its subcellular location is the extracellular space. The protein resides in the extracellular matrix. Binds heparin and heparan sulfate with high affinity, but lacks heparanase activity. Inhibits HPSE, possibly by competing for its substrates (in vitro). This chain is Inactive heparanase-2 (Hpse2), found in Mus musculus (Mouse).